Here is a 551-residue protein sequence, read N- to C-terminus: Eukaryotic translation initiation factor 3 subunit D-2 (551 aa).

Positions 91–154 are disordered; sequence TKPYQRGRYR…RNTQNMGRRF (64 aa). The segment covering 95 to 113 has biased composition (basic residues); that stretch reads QRGRYRPNMRNNVRSRGRT. Positions 121–136 are enriched in low complexity; the sequence is ASLGGSTAGGATASTT. Residues 290–304 are RNA gate; the sequence is QFDLLTVNETSVEPP. A disordered region spans residues 527 to 551; sequence PENAFDSDGDEEEESSDPLSNSNDN. Acidic residues predominate over residues 531-542; the sequence is FDSDGDEEEESS.

The protein belongs to the eIF-3 subunit D family. Component of the eukaryotic translation initiation factor 3 (eIF-3) complex. The eIF-3 complex interacts with pix.

The protein localises to the cytoplasm. Functionally, mRNA cap-binding component of the eukaryotic translation initiation factor 3 (eIF-3) complex, which is involved in protein synthesis of a specialized repertoire of mRNAs and, together with other initiation factors, stimulates binding of mRNA and methionyl-tRNAi to the 40S ribosome. The eIF-3 complex specifically targets and initiates translation of a subset of mRNAs involved in cell proliferation. In the eIF-3 complex, eif3d specifically recognizes and binds the 7-methylguanosine cap of a subset of mRNAs. The sequence is that of Eukaryotic translation initiation factor 3 subunit D-2 from Drosophila melanogaster (Fruit fly).